Here is a 100-residue protein sequence, read N- to C-terminus: Pancreatic polypeptide prohormone (100 aa).

The signal sequence occupies residues 1–29; it reads MAVAYCCLSLFLVSTWVALLLQPLQGTWG. Tyrosine amide is present on tyrosine 65.

It belongs to the NPY family. No icosapeptide-like peptide is cleaved from the C-terminal.

Its subcellular location is the secreted. Its function is as follows. Hormone secreted by pancreatic cells that acts as a regulator of pancreatic and gastrointestinal functions probably by signaling through the G protein-coupled receptor NPY4R2. The sequence is that of Pancreatic polypeptide prohormone (Ppy) from Mus musculus (Mouse).